The chain runs to 701 residues: Rab-like protein 6 (701 aa).

Methionine 1 is subject to N-acetylmethionine. A small GTPase-like region spans residues 39-279 (GVQYNMKIVI…IFLEMMEARS (241 aa)). Residues 50–57 (GDRNTGKT), 100–104 (DVVDK), and 177–179 (YRD) each bind GTP. Positions 279–701 (SRGHASPLTT…LRGGGDYEAL (423 aa)) are disordered. The segment covering 284–315 (SPLTTSGQSPSSGSQSPVVPPSTVSTGSSSPS) has biased composition (low complexity). Pro residues predominate over residues 316–344 (TPQPVLQPPLQAPPAPPAPAEAPPLPAAP). Phosphoserine is present on residues serine 394, serine 416, serine 418, serine 461, and serine 462. Over residues 495–506 (ALGPPRDAAPRA) the composition is skewed to low complexity. Residue serine 552 is modified to Phosphoserine. Residues 555-569 (DAQRRAGEFPVREDL) are compositionally biased toward basic and acidic residues. At serine 570 the chain carries Phosphoserine. Position 573 is a phosphothreonine (threonine 573). Pro residues predominate over residues 580 to 589 (VQPPAPPKPL). The span at 608–626 (EPGREDSSEQDKEGRPPAK) shows a compositional bias: basic and acidic residues. Residues serine 614 and serine 615 each carry the phosphoserine modification. The tract at residues 629–667 (KKKKKKGREEEDKAAKKRSKHKKSRERADDKGRDERRRR) is interaction with CDKN2A. Over residues 643 to 653 (AKKRSKHKKSR) the composition is skewed to basic residues. Over residues 654–665 (ERADDKGRDERR) the composition is skewed to basic and acidic residues. Residues 683–701 (LGGGAPSGPLRGGGDYEAL) are compositionally biased toward gly residues.

The protein belongs to the small GTPase superfamily. Rab family.

It localises to the nucleus. Its subcellular location is the cytoplasm. In terms of biological role, may enhance cellular proliferation. May reduce growth inhibitory activity of CDKN2A. This Bos taurus (Bovine) protein is Rab-like protein 6 (RABL6).